Consider the following 188-residue polypeptide: uncharacterized protein (188 aa).

A Phosphoserine modification is found at Ser14. A disordered region spans residues 165 to 188; sequence RQAMAAKRNRFRKNVRKLPNKKKH. The segment covering 171 to 188 has biased composition (basic residues); the sequence is KRNRFRKNVRKLPNKKKH.

The protein localises to the nucleus. The protein resides in the nucleolus. This is an uncharacterized protein from Schizosaccharomyces pombe (strain 972 / ATCC 24843) (Fission yeast).